Consider the following 377-residue polypeptide: Histidinol-phosphate aminotransferase (377 aa).

Lys230 carries the post-translational modification N6-(pyridoxal phosphate)lysine.

The protein belongs to the class-II pyridoxal-phosphate-dependent aminotransferase family. Histidinol-phosphate aminotransferase subfamily. Homodimer. Requires pyridoxal 5'-phosphate as cofactor.

The catalysed reaction is L-histidinol phosphate + 2-oxoglutarate = 3-(imidazol-4-yl)-2-oxopropyl phosphate + L-glutamate. It functions in the pathway amino-acid biosynthesis; L-histidine biosynthesis; L-histidine from 5-phospho-alpha-D-ribose 1-diphosphate: step 7/9. The sequence is that of Histidinol-phosphate aminotransferase from Mycobacterium leprae (strain Br4923).